We begin with the raw amino-acid sequence, 330 residues long: Delta-aminolevulinic acid dehydratase (330 aa).

K203 functions as the Schiff-base intermediate with substrate in the catalytic mechanism. 5-aminolevulinate is bound by residues R213 and R224. A Mg(2+)-binding site is contributed by E240. K255 acts as the Schiff-base intermediate with substrate in catalysis. Positions 281 and 320 each coordinate 5-aminolevulinate.

It belongs to the ALAD family. In terms of assembly, homooctamer.

It carries out the reaction 2 5-aminolevulinate = porphobilinogen + 2 H2O + H(+). It participates in porphyrin-containing compound metabolism; protoporphyrin-IX biosynthesis; coproporphyrinogen-III from 5-aminolevulinate: step 1/4. Catalyzes an early step in the biosynthesis of tetrapyrroles. Binds two molecules of 5-aminolevulinate per subunit, each at a distinct site, and catalyzes their condensation to form porphobilinogen. The chain is Delta-aminolevulinic acid dehydratase (hemB) from Streptomyces coelicolor (strain ATCC BAA-471 / A3(2) / M145).